Here is a 337-residue protein sequence, read N- to C-terminus: Putative tRNA (cytidine(32)/guanosine(34)-2'-O)-methyltransferase (337 aa).

Residues Gly53, Trp55, Asp76, Asp92, and Asp117 each coordinate S-adenosyl-L-methionine. The Proton acceptor role is filled by Lys157. Composition is skewed to basic and acidic residues over residues 304 to 318 (LKAE…KKTP) and 327 to 337 (ELEKAAEKFQL). The tract at residues 304-337 (LKAELSRGKDQKKTPAENVPSVEELEKAAEKFQL) is disordered.

It belongs to the class I-like SAM-binding methyltransferase superfamily. RNA methyltransferase RlmE family. TRM7 subfamily.

Its subcellular location is the cytoplasm. The catalysed reaction is cytidine(32)/guanosine(34) in tRNA + 2 S-adenosyl-L-methionine = 2'-O-methylcytidine(32)/2'-O-methylguanosine(34) in tRNA + 2 S-adenosyl-L-homocysteine + 2 H(+). Methylates the 2'-O-ribose of nucleotides at positions 32 and 34 of the tRNA anticodon loop of substrate tRNAs. In Caenorhabditis elegans, this protein is Putative tRNA (cytidine(32)/guanosine(34)-2'-O)-methyltransferase.